Consider the following 230-residue polypeptide: Orotidine 5'-phosphate decarboxylase (230 aa).

Substrate contacts are provided by residues D10, K31, 58 to 67 (DLKLHDIPNT), T117, R179, Q188, G208, and R209. Residue K60 is the Proton donor of the active site.

The protein belongs to the OMP decarboxylase family. Type 1 subfamily. Homodimer.

The enzyme catalyses orotidine 5'-phosphate + H(+) = UMP + CO2. It functions in the pathway pyrimidine metabolism; UMP biosynthesis via de novo pathway; UMP from orotate: step 2/2. In terms of biological role, catalyzes the decarboxylation of orotidine 5'-monophosphate (OMP) to uridine 5'-monophosphate (UMP). This is Orotidine 5'-phosphate decarboxylase from Staphylococcus aureus (strain USA300).